Consider the following 609-residue polypeptide: Tyrosyl-DNA phosphodiesterase 1 (609 aa).

Polar residues predominate over residues 1–12; it reads MSQESSYGKWTI. The interval 1–155 is disordered; that stretch reads MSQESSYGKW…YETSGEGQDI (155 aa). S61 is modified (phosphoserine). A compositionally biased stretch (basic and acidic residues) spans 105-118; sequence QPKRVLPQEKKHVS. A phosphoserine mark is found at S119 and S132. Position 148 is a phosphothreonine (T148). S149 is modified (phosphoserine). H264 serves as the catalytic Nucleophile. Residue K266 coordinates substrate. An interaction with DNA region spans residues 401-404; that stretch reads SIGS. H494 acts as the Proton donor/acceptor in catalysis. K496 contributes to the substrate binding site.

It belongs to the tyrosyl-DNA phosphodiesterase family. Monomer. Ubiquitous.

The protein localises to the nucleus. Its subcellular location is the cytoplasm. Functionally, DNA repair enzyme that can remove a variety of covalent adducts from DNA through hydrolysis of a 3'-phosphodiester bond, giving rise to DNA with a free 3' phosphate. Catalyzes the hydrolysis of dead-end complexes between DNA and the topoisomerase I active site tyrosine residue. Hydrolyzes 3'-phosphoglycolates on protruding 3' ends on DNA double-strand breaks due to DNA damage by radiation and free radicals. Acts on blunt-ended double-strand DNA breaks and on single-stranded DNA. Has low 3'exonuclease activity and can remove a single nucleoside from the 3'end of DNA and RNA molecules with 3'hydroxyl groups. Has no exonuclease activity towards DNA or RNA with a 3'phosphate. This chain is Tyrosyl-DNA phosphodiesterase 1 (Tdp1), found in Mus musculus (Mouse).